The sequence spans 552 residues: Lysine--tRNA ligase (552 aa).

The 'HIGH' region signature appears at 72–80 (PSGLPHLGT). A 'KMSKS' region motif is present at residues 320–324 (KISKS). Lysine 323 contributes to the ATP binding site.

Belongs to the class-I aminoacyl-tRNA synthetase family.

Its subcellular location is the cytoplasm. It catalyses the reaction tRNA(Lys) + L-lysine + ATP = L-lysyl-tRNA(Lys) + AMP + diphosphate. The polypeptide is Lysine--tRNA ligase (Caulobacter vibrioides (strain ATCC 19089 / CIP 103742 / CB 15) (Caulobacter crescentus)).